The sequence spans 79 residues: Small ribosomal subunit protein bS18 (79 aa).

It belongs to the bacterial ribosomal protein bS18 family. As to quaternary structure, part of the 30S ribosomal subunit. Forms a tight heterodimer with protein bS6.

In terms of biological role, binds as a heterodimer with protein bS6 to the central domain of the 16S rRNA, where it helps stabilize the platform of the 30S subunit. The protein is Small ribosomal subunit protein bS18 of Rhodopseudomonas palustris (strain BisB5).